The following is a 32-amino-acid chain: 24 kDa flagellin (32 aa).

This sequence belongs to the archaeal flagellin family. Glycosylated.

The protein resides in the archaeal flagellum. Its function is as follows. Flagellin is the subunit protein which polymerizes to form the filaments of archaeal flagella. The protein is 24 kDa flagellin of Methanospirillum hungatei.